The chain runs to 492 residues: 2,3-bisphosphoglycerate-independent phosphoglycerate mutase (492 aa).

Residues D11 and S61 each contribute to the Mn(2+) site. Residue S61 is the Phosphoserine intermediate of the active site. Substrate is bound by residues H118, 147 to 148, R178, R184, 248 to 251, and K320; these read RD and RNDR. Mn(2+) contacts are provided by D386, H390, D427, H428, and H445.

It belongs to the BPG-independent phosphoglycerate mutase family. As to quaternary structure, monomer. It depends on Mn(2+) as a cofactor.

The enzyme catalyses (2R)-2-phosphoglycerate = (2R)-3-phosphoglycerate. It functions in the pathway carbohydrate degradation; glycolysis; pyruvate from D-glyceraldehyde 3-phosphate: step 3/5. Catalyzes the interconversion of 2-phosphoglycerate and 3-phosphoglycerate. The polypeptide is 2,3-bisphosphoglycerate-independent phosphoglycerate mutase (Campylobacter jejuni subsp. doylei (strain ATCC BAA-1458 / RM4099 / 269.97)).